We begin with the raw amino-acid sequence, 189 residues long: Elongation factor P (189 aa).

K34 is subject to N6-(3,6-diaminohexanoyl)-5-hydroxylysine.

It belongs to the elongation factor P family. May be beta-lysylated on the epsilon-amino group of Lys-34 by the combined action of EpmA and EpmB, and then hydroxylated on the C5 position of the same residue by EpmC (if this protein is present). Lysylation is critical for the stimulatory effect of EF-P on peptide-bond formation. The lysylation moiety may extend toward the peptidyltransferase center and stabilize the terminal 3-CCA end of the tRNA. Hydroxylation of the C5 position on Lys-34 may allow additional potential stabilizing hydrogen-bond interactions with the P-tRNA.

Its subcellular location is the cytoplasm. The protein operates within protein biosynthesis; polypeptide chain elongation. In terms of biological role, involved in peptide bond synthesis. Alleviates ribosome stalling that occurs when 3 or more consecutive Pro residues or the sequence PPG is present in a protein, possibly by augmenting the peptidyl transferase activity of the ribosome. Modification of Lys-34 is required for alleviation. The chain is Elongation factor P from Alcanivorax borkumensis (strain ATCC 700651 / DSM 11573 / NCIMB 13689 / SK2).